A 432-amino-acid chain; its full sequence is Phosphoprotein associated with glycosphingolipid-enriched microdomains 1 (432 aa).

Topologically, residues 1–16 (MGPAGSLLGSGQMQIT) are extracellular. Residues 17–37 (LWGSLAAVAIFFVITFLIFLC) traverse the membrane as a helical; Signal-anchor for type III membrane protein segment. S-palmitoyl cysteine attachment occurs at residues cysteine 37 and cysteine 40. Residues 38–432 (SSCDREKKPR…LQQGRDITRL (395 aa)) lie on the Cytoplasmic side of the membrane. A phosphoserine mark is found at serine 50 and serine 61. Tyrosine 105 carries the phosphotyrosine; by LYN modification. Residues 110–122 (TSASDLLDSQDST) are compositionally biased toward polar residues. Positions 110–137 (TSASDLLDSQDSTGKPKCHQSRELPRIP) are disordered. Phosphotyrosine occurs at positions 163, 181, and 227. Disordered regions lie at residues 197–230 (EKGH…YASV) and 244–432 (SILG…ITRL). Over residues 220–230 (GKAEFAEYASV) the composition is skewed to basic and acidic residues. Serine 229 is subject to Phosphoserine. The segment covering 316 to 356 (MYSSVNKPGQLVNKSGQSLTVPESTYTSIQGDPQRSPSSCN) has biased composition (polar residues). Tyrosine 317 carries the phosphotyrosine; by FYN and LYN modification. Residues 317 to 320 (YSSV) are interaction with CSK. Serine 354 is modified (phosphoserine). Residue tyrosine 359 is modified to Phosphotyrosine. Serine 380 carries the post-translational modification Phosphoserine. Phosphotyrosine occurs at positions 387 and 417. Residues 430-432 (TRL) are interaction with NHERF1.

In terms of assembly, interacts with FYN. When phosphorylated, interacts with CSK. Interacts with NHERF1/EBP50. In resting T-cells, part of a PAG1-NHERF1-MSN complex which is disrupted upon TCR activation. Interacts with LYN on plasma membrane lipid rafts. Identified in a complex with LYN and STAT3. Post-translationally, palmitoylated. Phosphorylated by FYN on Tyr-317 in resting T-cells; which promotes interaction with CSK. Dephosphorylated by PTPRC/CD45 upon TCR activation; which leads to CSK dissociation. May also be dephosphorylated by PTPN11. Hyperphosphorylated in mast cells upon FCER1 activation. Phosphorylated by LYN. As to expression, ubiquitously expressed. Present in germinal center B-cells, plasma cells, T-cells, monocytes and platelets (at protein level).

It is found in the cell membrane. In terms of biological role, negatively regulates TCR (T-cell antigen receptor)-mediated signaling in T-cells and FCER1 (high affinity immunoglobulin epsilon receptor)-mediated signaling in mast cells. Promotes CSK activation and recruitment to lipid rafts, which results in LCK inhibition. Inhibits immunological synapse formation by preventing dynamic arrangement of lipid raft proteins. May be involved in cell adhesion signaling. In Homo sapiens (Human), this protein is Phosphoprotein associated with glycosphingolipid-enriched microdomains 1 (PAG1).